The chain runs to 269 residues: Formamidopyrimidine-DNA glycosylase (269 aa).

The Schiff-base intermediate with DNA role is filled by Pro-2. The Proton donor role is filled by Glu-3. Lys-57 serves as the catalytic Proton donor; for beta-elimination activity. 3 residues coordinate DNA: His-90, Arg-109, and Lys-150. The FPG-type zinc-finger motif lies at Gln-235–His-269. Residue Arg-259 is the Proton donor; for delta-elimination activity of the active site.

This sequence belongs to the FPG family. As to quaternary structure, monomer. Zn(2+) serves as cofactor.

The enzyme catalyses Hydrolysis of DNA containing ring-opened 7-methylguanine residues, releasing 2,6-diamino-4-hydroxy-5-(N-methyl)formamidopyrimidine.. It catalyses the reaction 2'-deoxyribonucleotide-(2'-deoxyribose 5'-phosphate)-2'-deoxyribonucleotide-DNA = a 3'-end 2'-deoxyribonucleotide-(2,3-dehydro-2,3-deoxyribose 5'-phosphate)-DNA + a 5'-end 5'-phospho-2'-deoxyribonucleoside-DNA + H(+). In terms of biological role, involved in base excision repair of DNA damaged by oxidation or by mutagenic agents. Acts as a DNA glycosylase that recognizes and removes damaged bases. Has a preference for oxidized purines, such as 7,8-dihydro-8-oxoguanine (8-oxoG). Has AP (apurinic/apyrimidinic) lyase activity and introduces nicks in the DNA strand. Cleaves the DNA backbone by beta-delta elimination to generate a single-strand break at the site of the removed base with both 3'- and 5'-phosphates. This chain is Formamidopyrimidine-DNA glycosylase, found in Yersinia pseudotuberculosis serotype O:1b (strain IP 31758).